An 89-amino-acid chain; its full sequence is Exodeoxyribonuclease 7 small subunit (89 aa).

This sequence belongs to the XseB family. Heterooligomer composed of large and small subunits.

The protein localises to the cytoplasm. The enzyme catalyses Exonucleolytic cleavage in either 5'- to 3'- or 3'- to 5'-direction to yield nucleoside 5'-phosphates.. Bidirectionally degrades single-stranded DNA into large acid-insoluble oligonucleotides, which are then degraded further into small acid-soluble oligonucleotides. The sequence is that of Exodeoxyribonuclease 7 small subunit from Chlorobium phaeobacteroides (strain DSM 266 / SMG 266 / 2430).